A 122-amino-acid polypeptide reads, in one-letter code: Large ribosomal subunit protein uL18 (122 aa).

Residues 1–27 are disordered; sequence MATLSKKQQTQKRHKRLRRHLNGTNHR. The segment covering 9-27 has biased composition (basic residues); it reads QTQKRHKRLRRHLNGTNHR.

Belongs to the universal ribosomal protein uL18 family. In terms of assembly, part of the 50S ribosomal subunit; part of the 5S rRNA/L5/L18/L25 subcomplex. Contacts the 5S and 23S rRNAs.

This is one of the proteins that bind and probably mediate the attachment of the 5S RNA into the large ribosomal subunit, where it forms part of the central protuberance. The protein is Large ribosomal subunit protein uL18 of Prochlorococcus marinus (strain MIT 9211).